The chain runs to 584 residues: Endogenous retrovirus group FC1 Env polyprotein (584 aa).

Residues 1–22 form the signal peptide; it reads MARPSPLCLLLLLTLLPPIVPS. The Extracellular segment spans residues 23-514; that stretch reads NSLLTEPPFR…NYGGGWWQSP (492 aa). N-linked (GlcNAc...) asparagine glycosylation is found at Asn-69 and Asn-247. The CXXC signature appears at 251-254; the sequence is CFLC. N-linked (GlcNAc...) asparagine glycosylation is found at Asn-272, Asn-276, Asn-308, Asn-313, Asn-322, Asn-334, Asn-342, and Asn-346. A fusion peptide region spans residues 388–413; that stretch reads PLVIGVSLTSSLVASGLGTGAIVHFI. Positions 449–465 match the CKS-17 motif; the sequence is MQNRRALDLLTADKGGT. Cys-466 and Cys-473 are oxidised to a cystine. A CX6CC motif is present at residues 466–474; that stretch reads CMFLGEECC. Asn-478 carries an N-linked (GlcNAc...) asparagine glycan. Residues 515–540 form a helical membrane-spanning segment; the sequence is LTTWIIPFISPILIICLLLLIAPCVL. The Cytoplasmic segment spans residues 541–584; it reads KFIKNRISEVSRVTVNQMLLHPYSRLPTSEDHYDVALTQQEAAR.

The protein belongs to the gamma type-C retroviral envelope protein family. HERV class-I F(c)1 env subfamily. In terms of assembly, the surface (SU) and transmembrane (TM) proteins form a heterodimer. SU and TM are attached by noncovalent interactions or by a labile interchain disulfide bond. In terms of processing, specific enzymatic cleavages in vivo yield the mature SU and TM proteins. Post-translationally, the CXXC motif is highly conserved across a broad range of retroviral envelope proteins. It is thought to participate in the formation of a labile disulfide bond possibly with the CX6CC motif present in the transmembrane protein.

It is found in the virion. It localises to the cell membrane. In terms of biological role, retroviral envelope proteins mediate receptor recognition and membrane fusion during early infection. Endogenous envelope proteins may have kept, lost or modified their original function during evolution. This endogenous envelope protein has lost its original fusogenic properties. Functionally, SU mediates receptor recognition. TM anchors the envelope heterodimer to the viral membrane through one transmembrane domain. The other hydrophobic domain, called fusion peptide, mediates fusion of the viral membrane with the target cell membrane. The protein is Endogenous retrovirus group FC1 Env polyprotein (ERVFC1) of Pan troglodytes (Chimpanzee).